The sequence spans 354 residues: Guanine nucleotide-binding protein G(q) subunit alpha (354 aa).

Residues Cys3 and Cys4 are each lipidated (S-palmitoyl cysteine). The 323-residue stretch at 32 to 354 folds into the G-alpha domain; it reads RELKLLLLGT…QLNLKEYNLV (323 aa). A G1 motif region spans residues 35–48; the sequence is KLLLLGTGESGKST. GTP contacts are provided by residues 40-47, 174-180, 199-203, 269-272, and Ala326; these read GTGESGKS, LRVRVPT, DVGGQ, and NKKD. Residues Ser47 and Thr180 each coordinate Mg(2+). Residues 172–180 form a G2 motif region; the sequence is DILRVRVPT. A G3 motif region spans residues 195–204; the sequence is FRMVDVGGQR. The interval 265 to 272 is G4 motif; sequence ILFLNKKD. The segment at 324-329 is G5 motif; the sequence is TCATDT.

Belongs to the G-alpha family. G(q) subfamily. G proteins are composed of 3 units; alpha, beta and gamma. The alpha chain contains the guanine nucleotide binding site. A high concentration was found in the retinal light-sensitive outer segment.

Its function is as follows. Guanine nucleotide-binding proteins (G proteins) are involved as modulators or transducers in various transmembrane signaling systems. The G(q) alpha subunit is involved in the light-dependent activation of phospholipase C. This Loligo forbesii (Veined squid) protein is Guanine nucleotide-binding protein G(q) subunit alpha.